A 954-amino-acid polypeptide reads, in one-letter code: Glycine dehydrogenase (decarboxylating) (954 aa).

Lysine 704 carries the N6-(pyridoxal phosphate)lysine modification.

It belongs to the GcvP family. As to quaternary structure, the glycine cleavage system is composed of four proteins: P, T, L and H. It depends on pyridoxal 5'-phosphate as a cofactor.

It carries out the reaction N(6)-[(R)-lipoyl]-L-lysyl-[glycine-cleavage complex H protein] + glycine + H(+) = N(6)-[(R)-S(8)-aminomethyldihydrolipoyl]-L-lysyl-[glycine-cleavage complex H protein] + CO2. In terms of biological role, the glycine cleavage system catalyzes the degradation of glycine. The P protein binds the alpha-amino group of glycine through its pyridoxal phosphate cofactor; CO(2) is released and the remaining methylamine moiety is then transferred to the lipoamide cofactor of the H protein. This is Glycine dehydrogenase (decarboxylating) from Rhizobium meliloti (strain 1021) (Ensifer meliloti).